The chain runs to 153 residues: MAAGLFGLSARRLLAAAATRGLPAARVRWESSFSRTVVAPSAVAGKRPPEPTTQWQEDPEPEDENLYEKNPDSHGYDKDPVLDVWNMRLVFFFGVSIILVLGSTFVAYLPDYRMKEWSRREAERLVKYREANGLPIMESNCFDPSKIELPEDE.

Residues 1–29 (MAAGLFGLSARRLLAAAATRGLPAARVRW) constitute a mitochondrion transit peptide. Residues 40–77 (PSAVAGKRPPEPTTQWQEDPEPEDENLYEKNPDSHGYD) form a disordered region. Basic and acidic residues predominate over residues 66–77 (LYEKNPDSHGYD). Residues 89–109 (LVFFFGVSIILVLGSTFVAYL) form a helical membrane-spanning segment.

Belongs to the complex I NDUFB11 subunit family. As to quaternary structure, complex I is composed of 45 different subunits. Interacts with BCAP31.

The protein resides in the mitochondrion inner membrane. Functionally, accessory subunit of the mitochondrial membrane respiratory chain NADH dehydrogenase (Complex I), that is believed not to be involved in catalysis. Complex I functions in the transfer of electrons from NADH to the respiratory chain. The immediate electron acceptor for the enzyme is believed to be ubiquinone. This is NADH dehydrogenase [ubiquinone] 1 beta subcomplex subunit 11, mitochondrial (NDUFB11) from Gorilla gorilla gorilla (Western lowland gorilla).